Here is a 689-residue protein sequence, read N- to C-terminus: Glycine--tRNA ligase beta subunit (689 aa).

The protein belongs to the class-II aminoacyl-tRNA synthetase family. As to quaternary structure, tetramer of two alpha and two beta subunits.

The protein resides in the cytoplasm. The enzyme catalyses tRNA(Gly) + glycine + ATP = glycyl-tRNA(Gly) + AMP + diphosphate. This is Glycine--tRNA ligase beta subunit from Shigella boydii serotype 4 (strain Sb227).